A 130-amino-acid polypeptide reads, in one-letter code: Serum amyloid A-4 protein (130 aa).

The first 18 residues, 1 to 18, serve as a signal peptide directing secretion; it reads MRLFTGIVFCSLVMGVTS. N94 carries an N-linked (GlcNAc...) asparagine; partial glycan. Residues 101–130 are disordered; the sequence is DSKSNEKAEEWGRSGKDPDRFRPDGLPKKY.

This sequence belongs to the SAA family. In terms of assembly, apolipoprotein of the HDL complex. In terms of tissue distribution, expressed by the liver; secreted in plasma.

Its subcellular location is the secreted. Functionally, major acute phase reactant. The polypeptide is Serum amyloid A-4 protein (Homo sapiens (Human)).